Reading from the N-terminus, the 257-residue chain is Snake venom serine protease KN8 (257 aa).

Positions 1-18 (MVLIRVLANLLILQLSYA) are cleaved as a signal peptide. Positions 19-24 (QKSSEL) are excised as a propeptide. Positions 25-248 (VVGGLPCNIN…HLDWIKSIIA (224 aa)) constitute a Peptidase S1 domain. 5 cysteine pairs are disulfide-bonded: Cys-31-Cys-162, Cys-49-Cys-65, Cys-141-Cys-209, Cys-173-Cys-188, and Cys-199-Cys-224. The active-site Charge relay system is the His-64. Asn-102 is a glycosylation site (N-linked (GlcNAc...) asparagine). Asp-109 serves as the catalytic Charge relay system. Residues Asn-120 and Asn-121 are each glycosylated (N-linked (GlcNAc...) asparagine). Ser-203 functions as the Charge relay system in the catalytic mechanism.

This sequence belongs to the peptidase S1 family. Snake venom subfamily. Monomer. In terms of tissue distribution, expressed by the venom gland.

The protein resides in the secreted. In terms of biological role, snake venom serine protease that may act in the hemostasis system of the prey. This Trimeresurus stejnegeri (Chinese green tree viper) protein is Snake venom serine protease KN8.